Here is a 364-residue protein sequence, read N- to C-terminus: Histidinol-phosphate aminotransferase 1 (364 aa).

Lys-211 bears the N6-(pyridoxal phosphate)lysine mark.

It belongs to the class-II pyridoxal-phosphate-dependent aminotransferase family. Histidinol-phosphate aminotransferase subfamily. As to quaternary structure, homodimer. The cofactor is pyridoxal 5'-phosphate.

It catalyses the reaction L-histidinol phosphate + 2-oxoglutarate = 3-(imidazol-4-yl)-2-oxopropyl phosphate + L-glutamate. It participates in amino-acid biosynthesis; L-histidine biosynthesis; L-histidine from 5-phospho-alpha-D-ribose 1-diphosphate: step 7/9. The chain is Histidinol-phosphate aminotransferase 1 from Legionella pneumophila subsp. pneumophila (strain Philadelphia 1 / ATCC 33152 / DSM 7513).